A 353-amino-acid polypeptide reads, in one-letter code: Photosystem II protein D1 (353 aa).

N-acetylthreonine is present on T2. Residue T2 is modified to Phosphothreonine. 3 helical membrane passes run Y29–S46, H118–L133, and W142–A156. H118 is a chlorophyll a binding site. Y126 contacts pheophytin a. Residues D170 and E189 each coordinate [CaMn4O5] cluster. The chain crosses the membrane as a helical span at residues F197 to L218. Position 198 (H198) interacts with chlorophyll a. A quinone-binding positions include H215 and S264 to F265. H215 serves as a coordination point for Fe cation. Fe cation is bound at residue H272. Residues F274–L288 form a helical membrane-spanning segment. Residues H332, E333, D342, and A344 each coordinate [CaMn4O5] cluster. A propeptide spanning residues S345–A353 is cleaved from the precursor.

Belongs to the reaction center PufL/M/PsbA/D family. PSII is composed of 1 copy each of membrane proteins PsbA, PsbB, PsbC, PsbD, PsbE, PsbF, PsbH, PsbI, PsbJ, PsbK, PsbL, PsbM, PsbT, PsbX, PsbY, PsbZ, Psb30/Ycf12, at least 3 peripheral proteins of the oxygen-evolving complex and a large number of cofactors. It forms dimeric complexes. The D1/D2 heterodimer binds P680, chlorophylls that are the primary electron donor of PSII, and subsequent electron acceptors. It shares a non-heme iron and each subunit binds pheophytin, quinone, additional chlorophylls, carotenoids and lipids. D1 provides most of the ligands for the Mn4-Ca-O5 cluster of the oxygen-evolving complex (OEC). There is also a Cl(-1) ion associated with D1 and D2, which is required for oxygen evolution. The PSII complex binds additional chlorophylls, carotenoids and specific lipids. serves as cofactor. In terms of processing, tyr-161 forms a radical intermediate that is referred to as redox-active TyrZ, YZ or Y-Z. Post-translationally, C-terminally processed by CTPA; processing is essential to allow assembly of the oxygen-evolving complex and thus photosynthetic growth.

It is found in the plastid. The protein localises to the chloroplast thylakoid membrane. The catalysed reaction is 2 a plastoquinone + 4 hnu + 2 H2O = 2 a plastoquinol + O2. Photosystem II (PSII) is a light-driven water:plastoquinone oxidoreductase that uses light energy to abstract electrons from H(2)O, generating O(2) and a proton gradient subsequently used for ATP formation. It consists of a core antenna complex that captures photons, and an electron transfer chain that converts photonic excitation into a charge separation. The D1/D2 (PsbA/PsbD) reaction center heterodimer binds P680, the primary electron donor of PSII as well as several subsequent electron acceptors. This chain is Photosystem II protein D1, found in Ostreococcus tauri.